Here is a 320-residue protein sequence, read N- to C-terminus: Olfactory receptor 5C1 (320 aa).

The Extracellular portion of the chain corresponds to 1–29 (MNSENLTRAAVAPAEFVLLGITNRWDLRV). N-linked (GlcNAc...) asparagine glycosylation occurs at Asn-5. The helical transmembrane segment at 30–50 (ALFLTCLPVYLVSLLGNMGMA) threads the bilayer. The Cytoplasmic segment spans residues 51–58 (LLIRMDAR). Residues 59–79 (LHTPMYFFLANLSLLDACYSS) form a helical membrane-spanning segment. At 80 to 103 (AIGPKMLVDLLLPRATIPYTACAL) the chain is on the extracellular side. An intrachain disulfide couples Cys-101 to Cys-193. A helical transmembrane segment spans residues 104–124 (QMFVFAGLADTECCLLAAMAY). The Cytoplasmic segment spans residues 125–143 (DRYVAIRNPLLYTTAMSQR). The chain crosses the membrane as a helical span at residues 144 to 164 (LCLALLGASGLGGAVSAFVHT). Topologically, residues 165–200 (TLTFRLSFCRSRKINSFFCDIPPLLAISCSDTSLNE) are extracellular. Residues 201–221 (LLLFAICGFIQTATVLAITVS) form a helical membrane-spanning segment. The Cytoplasmic portion of the chain corresponds to 222-241 (YGFIAGAVIHMRSVEGSRRA). A helical membrane pass occupies residues 242–262 (ASTGGSHLTAVAMMYGTLIFM). Over 263–275 (YLRPSSSYALDTD) the chain is Extracellular. The helical transmembrane segment at 276–296 (KMASVFYTLVIPSLNPLIYSL) threads the bilayer. At 297–320 (RNKEVKEALRQTWSRFHCPGQGSQ) the chain is on the cytoplasmic side.

The protein belongs to the G-protein coupled receptor 1 family.

Its subcellular location is the cell membrane. Odorant receptor. This is Olfactory receptor 5C1 (OR5C1) from Homo sapiens (Human).